The following is a 704-amino-acid chain: E3 ubiquitin-protein ligase MBR1 (704 aa).

Disordered stretches follow at residues 1–20 (MNPM…VNQV), 37–61 (NPAD…SSSH), 176–197 (SSLG…SPFG), 245–354 (LSLA…GENQ), 381–403 (SNPS…PRSN), and 436–525 (SLFV…RHRR). Positions 43 to 61 (FPNNSTPSGRPTYASSSSH) are enriched in polar residues. 2 stretches are compositionally biased toward low complexity: residues 184–196 (AAGE…ASPF) and 245–255 (LSLATPSQSSP). Polar residues-rich tracts occupy residues 281–290 (FHSTRNTDTL), 300–329 (RQPQ…NLPL), and 340–354 (RSSS…GENQ). Positions 452 to 467 (QPNPTWIPPQNAPPHN) are enriched in pro residues. The segment covering 485–505 (SPSASHGGPLPLLPAGPSVSS) has biased composition (low complexity). Residues 656 to 697 (CCICQEEYVEGDNLGTLKCGHEFHKDCIKQWVMIKNLCPICK) form an RING-type; atypical zinc finger.

It belongs to the RING-type zinc finger family. As to quaternary structure, interacts with MED25 and UBC11.

It catalyses the reaction S-ubiquitinyl-[E2 ubiquitin-conjugating enzyme]-L-cysteine + [acceptor protein]-L-lysine = [E2 ubiquitin-conjugating enzyme]-L-cysteine + N(6)-ubiquitinyl-[acceptor protein]-L-lysine.. It functions in the pathway protein modification; protein ubiquitination. Functionally, E3 ubiquitin-protein ligase that functions as a regulator of MED25 stability by targeting MED25 for degradation in a RING-H2-dependent way. Proteasome-dependent degradation of MED25 seems to activate its function as positive regulator of FLOWERING LOCUS T (FT) and is important to induce the expression of FT and consequently to promote flowering. The protein is E3 ubiquitin-protein ligase MBR1 (MBR1) of Arabidopsis thaliana (Mouse-ear cress).